A 497-amino-acid chain; its full sequence is NAD(P)H-quinone oxidoreductase chain 4, chloroplastic (497 aa).

A run of 14 helical transmembrane segments spans residues 5-25 (VPWL…IPIL), 36-56 (YTLG…YCHF), 88-108 (LGLV…AWPI), 112-132 (TRLF…LFVS), 135-155 (ILLF…LLCL), 168-188 (FVLY…TMSF), 212-232 (VLIY…FPFH), 243-263 (HYST…YGLI), 275-295 (FLLG…ASLI), 306-326 (IAYS…SFTE), 331-351 (GAIL…FLAG), 387-407 (LALP…GVVT), 418-438 (GITV…LSML), and 463-483 (LFIL…PNLI).

The protein belongs to the complex I subunit 4 family.

It is found in the plastid. It localises to the chloroplast thylakoid membrane. It catalyses the reaction a plastoquinone + NADH + (n+1) H(+)(in) = a plastoquinol + NAD(+) + n H(+)(out). The catalysed reaction is a plastoquinone + NADPH + (n+1) H(+)(in) = a plastoquinol + NADP(+) + n H(+)(out). This Adiantum capillus-veneris (Maidenhair fern) protein is NAD(P)H-quinone oxidoreductase chain 4, chloroplastic.